The primary structure comprises 206 residues: Guanylate kinase (206 aa).

The Guanylate kinase-like domain occupies 6–184 (GTLYIISAPS…ALGDLKAIFR (179 aa)). An ATP-binding site is contributed by 13 to 20 (APSGAGKS).

Belongs to the guanylate kinase family.

The protein resides in the cytoplasm. The enzyme catalyses GMP + ATP = GDP + ADP. Essential for recycling GMP and indirectly, cGMP. The protein is Guanylate kinase of Pseudomonas fluorescens (strain ATCC BAA-477 / NRRL B-23932 / Pf-5).